The sequence spans 475 residues: ESX-3 secretion system protein EccD3 (475 aa).

11 helical membrane passes run 132-152, 161-181, 186-206, 212-232, 241-261, 264-284, 333-353, 354-374, 384-404, 409-429, and 453-473; these read IARG…GLSV, LLGQ…ALAV, AVLA…AFAL, FGAP…LISM, IAVF…AGAA, WVIS…IVTV, GVIA…VSSA, NASP…ALRA, AWLL…FVIG, AALW…VAAL, and GLDA…SLVL.

Belongs to the EccD/Snm4 family. Part of the ESX-3 / type VII secretion system (T7SS), which is composed of cytosolic and membrane components. The ESX-3 membrane complex is composed of EccB3, EccC3, EccD3 and EccE3.

The protein resides in the cell inner membrane. In terms of biological role, part of the ESX-3 specialized secretion system, which is required for siderophore-mediated iron acquisition and for the secretion of EsxH and EsxG. In Mycolicibacterium smegmatis (strain ATCC 700084 / mc(2)155) (Mycobacterium smegmatis), this protein is ESX-3 secretion system protein EccD3.